The following is an 863-amino-acid chain: Neuroligin-1 (863 aa).

Positions 1–45 are cleaved as a signal peptide; sequence MALPRCTWPNYVWRAVMACLVHRGLGAPLTLCMLGCLLQAGHVLS. Topologically, residues 46–717 are extracellular; that stretch reads QKLDDVDPLV…DQRDYSTELS (672 aa). N109 is a glycosylation site (N-linked (GlcNAc...) (complex) asparagine). The cysteines at positions 117 and 153 are disulfide-linked. The interval 183–212 is disordered; that stretch reads KGGPLTKKQTDDLGDNDGAEDEDIRDSGGP. A compositionally biased stretch (acidic residues) spans 194–206; sequence DLGDNDGAEDEDI. 2 N-linked (GlcNAc...) (complex) asparagine glycosylation sites follow: N323 and N363. Cystine bridges form between C362–C373 and C532–C566. N-linked (GlcNAc...) asparagine glycosylation occurs at N567. The disordered stretch occupies residues 670 to 708; it reads PSTDITFRPTRKNSVPVTSAFPTAKQDDPKQQPSPFSVD. A compositionally biased stretch (polar residues) spans 681–690; the sequence is KNSVPVTSAF. 2 O-linked (GalNAc...) serine glycosylation sites follow: S703 and S706. Residues 718–738 form a helical membrane-spanning segment; sequence VTIAVGASLLFLNILAFAALY. Over 739–863 the chain is Cytoplasmic; that stretch reads YKKDKRRHDV…HPHSHSTTRV (125 aa). The segment at 842 to 863 is disordered; it reads GGQNNTLPHPHPHPHSHSTTRV. The segment covering 851-863 has biased composition (basic residues); it reads PHPHPHSHSTTRV.

This sequence belongs to the type-B carboxylesterase/lipase family. As to quaternary structure, interacts with neurexins NRXN1, NRXN2 and NRXN3. Interaction with neurexins is mediated by heparan sulfate glycan modification on neurexin. Interacts with NLGN3. Interacts with AIP1 and PDZRN3. Interacts (via its C-terminus) with DLG4/PSD-95 (via PDZ domain 3). Interacts with GOPC. Expressed in the blood vessel walls (at protein level). Highly expressed in brain through prenatal stages, and at lower levels in pancreas islet beta cells.

It is found in the cell membrane. Its subcellular location is the postsynaptic density. It localises to the synaptic cleft. The protein resides in the synaptic cell membrane. Its function is as follows. Cell surface protein involved in cell-cell-interactions via its interactions with neurexin family members. Plays a role in synapse function and synaptic signal transmission, and probably mediates its effects by recruiting and clustering other synaptic proteins. May promote the initial formation of synapses, but is not essential for this. In vitro, triggers the de novo formation of presynaptic structures. May be involved in specification of excitatory synapses. Required to maintain wakefulness quality and normal synchrony of cerebral cortex activity during wakefulness and sleep. The protein is involved in nervous system development. This is Neuroligin-1 (NLGN1) from Homo sapiens (Human).